Reading from the N-terminus, the 109-residue chain is Nucleoid-associated protein HS_1309 (109 aa).

It belongs to the YbaB/EbfC family. In terms of assembly, homodimer.

The protein localises to the cytoplasm. The protein resides in the nucleoid. Its function is as follows. Binds to DNA and alters its conformation. May be involved in regulation of gene expression, nucleoid organization and DNA protection. The protein is Nucleoid-associated protein HS_1309 of Histophilus somni (strain 129Pt) (Haemophilus somnus).